We begin with the raw amino-acid sequence, 377 residues long: Lipoyl synthase, mitochondrial (377 aa).

Residues Cys-98, Cys-103, Cys-109, Cys-128, Cys-132, Cys-135, and Ser-343 each coordinate [4Fe-4S] cluster. In terms of domain architecture, Radical SAM core spans 113–332 (KKSEATATIM…RDTALDMGFL (220 aa)).

Belongs to the radical SAM superfamily. Lipoyl synthase family. [4Fe-4S] cluster is required as a cofactor.

It localises to the mitochondrion. It carries out the reaction [[Fe-S] cluster scaffold protein carrying a second [4Fe-4S](2+) cluster] + N(6)-octanoyl-L-lysyl-[protein] + 2 oxidized [2Fe-2S]-[ferredoxin] + 2 S-adenosyl-L-methionine + 4 H(+) = [[Fe-S] cluster scaffold protein] + N(6)-[(R)-dihydrolipoyl]-L-lysyl-[protein] + 4 Fe(3+) + 2 hydrogen sulfide + 2 5'-deoxyadenosine + 2 L-methionine + 2 reduced [2Fe-2S]-[ferredoxin]. It functions in the pathway protein modification; protein lipoylation via endogenous pathway; protein N(6)-(lipoyl)lysine from octanoyl-[acyl-carrier-protein]: step 2/2. In terms of biological role, catalyzes the radical-mediated insertion of two sulfur atoms into the C-6 and C-8 positions of the octanoyl moiety bound to the lipoyl domains of lipoate-dependent enzymes, thereby converting the octanoylated domains into lipoylated derivatives. This is Lipoyl synthase, mitochondrial from Candida tropicalis (strain ATCC MYA-3404 / T1) (Yeast).